Here is a 165-residue protein sequence, read N- to C-terminus: NADH-quinone oxidoreductase subunit I (165 aa).

2 4Fe-4S ferredoxin-type domains span residues 57–86 and 96–125; these read RRYENGEERCIACKLCEAVCPALAITIESE and TRYDIDLTKCIFCGFCEESCPVDSIVETHI. [4Fe-4S] cluster-binding residues include cysteine 66, cysteine 69, cysteine 72, cysteine 76, cysteine 105, cysteine 108, cysteine 111, and cysteine 115.

Belongs to the complex I 23 kDa subunit family. As to quaternary structure, NDH-1 is composed of 14 different subunits. Subunits NuoA, H, J, K, L, M, N constitute the membrane sector of the complex. Requires [4Fe-4S] cluster as cofactor.

Its subcellular location is the cell inner membrane. It carries out the reaction a quinone + NADH + 5 H(+)(in) = a quinol + NAD(+) + 4 H(+)(out). Functionally, NDH-1 shuttles electrons from NADH, via FMN and iron-sulfur (Fe-S) centers, to quinones in the respiratory chain. The immediate electron acceptor for the enzyme in this species is believed to be ubiquinone. Couples the redox reaction to proton translocation (for every two electrons transferred, four hydrogen ions are translocated across the cytoplasmic membrane), and thus conserves the redox energy in a proton gradient. This Methylibium petroleiphilum (strain ATCC BAA-1232 / LMG 22953 / PM1) protein is NADH-quinone oxidoreductase subunit I.